A 301-amino-acid chain; its full sequence is Tail tube protein (301 aa).

It belongs to the skunalikevirus tail tube protein family. In terms of assembly, homohexamer. Interacts with the tail terminator protein.

It localises to the virion. Forms the cylindrical rigid tail tube with a 4 nm wide central channel for DNA ejection. The tube is composed of 31 hexameric rings. The polypeptide is Tail tube protein (Lactococcus phage p2 (Lactococcus lactis bacteriophage p2)).